We begin with the raw amino-acid sequence, 94 residues long: Pyrimidine/purine nucleoside phosphorylase (94 aa).

The protein belongs to the nucleoside phosphorylase PpnP family.

It carries out the reaction a purine D-ribonucleoside + phosphate = a purine nucleobase + alpha-D-ribose 1-phosphate. The catalysed reaction is adenosine + phosphate = alpha-D-ribose 1-phosphate + adenine. It catalyses the reaction cytidine + phosphate = cytosine + alpha-D-ribose 1-phosphate. The enzyme catalyses guanosine + phosphate = alpha-D-ribose 1-phosphate + guanine. It carries out the reaction inosine + phosphate = alpha-D-ribose 1-phosphate + hypoxanthine. The catalysed reaction is thymidine + phosphate = 2-deoxy-alpha-D-ribose 1-phosphate + thymine. It catalyses the reaction uridine + phosphate = alpha-D-ribose 1-phosphate + uracil. The enzyme catalyses xanthosine + phosphate = alpha-D-ribose 1-phosphate + xanthine. Catalyzes the phosphorolysis of diverse nucleosides, yielding D-ribose 1-phosphate and the respective free bases. Can use uridine, adenosine, guanosine, cytidine, thymidine, inosine and xanthosine as substrates. Also catalyzes the reverse reactions. The protein is Pyrimidine/purine nucleoside phosphorylase of Pseudomonas entomophila (strain L48).